The chain runs to 124 residues: Thioredoxin domain-containing protein C21C3.12c (124 aa).

The 88-residue stretch at 37–124 folds into the Thioredoxin domain; the sequence is PWCPTVRAAL…ANKFSKFIDI (88 aa). The Nucleophile role is filled by C39.

It belongs to the thioredoxin family.

The protein resides in the cytoplasm. It is found in the nucleus. The sequence is that of Thioredoxin domain-containing protein C21C3.12c from Schizosaccharomyces pombe (strain 972 / ATCC 24843) (Fission yeast).